We begin with the raw amino-acid sequence, 201 residues long: Large ribosomal subunit protein uL4 (201 aa).

A disordered region spans residues 43–71; sequence TRAQKTRSEVSGGGKKPWAQKGTGRARAG.

The protein belongs to the universal ribosomal protein uL4 family. As to quaternary structure, part of the 50S ribosomal subunit.

Its function is as follows. One of the primary rRNA binding proteins, this protein initially binds near the 5'-end of the 23S rRNA. It is important during the early stages of 50S assembly. It makes multiple contacts with different domains of the 23S rRNA in the assembled 50S subunit and ribosome. Forms part of the polypeptide exit tunnel. This chain is Large ribosomal subunit protein uL4, found in Pseudoalteromonas translucida (strain TAC 125).